The sequence spans 444 residues: MYISKSFIPILKNNPSEAKIKSHQLMLRVGMIKQSSAGIYSWLPLGFKVMKKIEQIVREEQNKIGAQEILMPTIQPSDIWKESGRYDDYGDEMLRIKDRQGREMLYGPTNEELVTDIFRSSVKSYKSLPQLLYHIQWKFRDEVRPRFGIMRGREFYMKDAYSFDVNDEDATFSYNKFFFSYLKTFKRLELSAIPMAADTGPIGGNLSHEFIILADTGESKIFTDKRVFDLGSEGTVLDRQSLQDLRKKYEQYYAVADEKFNKNEFEEKVSEENRLITKGIEVGHIFYFGDKYSKALNAAVDLPGGKKDFVKMGSYGIGVSRLVGAIIEAKYDQKDEIMKWPFSVAPYELAIIPMINKNDTSALDKANKLFKHFESKNIDTIIDDMDENLSSKIKKFNLIGVPYQIILGKNSEDNLLEFKEIGKDPKSLTLDQITQILTEQKLKN.

It belongs to the class-II aminoacyl-tRNA synthetase family. ProS type 2 subfamily. As to quaternary structure, homodimer.

The protein resides in the cytoplasm. It carries out the reaction tRNA(Pro) + L-proline + ATP = L-prolyl-tRNA(Pro) + AMP + diphosphate. Functionally, catalyzes the attachment of proline to tRNA(Pro) in a two-step reaction: proline is first activated by ATP to form Pro-AMP and then transferred to the acceptor end of tRNA(Pro). The protein is Proline--tRNA ligase of Pelagibacter ubique (strain HTCC1062).